Reading from the N-terminus, the 253-residue chain is 2,3-bisphosphoglycerate-dependent phosphoglycerate mutase (253 aa).

Residues 12-19 (RHGESEWN), 25-26 (TG), arginine 64, 91-94 (ERHY), lysine 102, 118-119 (RR), and 187-188 (GN) contribute to the substrate site. Histidine 13 acts as the Tele-phosphohistidine intermediate in catalysis. Glutamate 91 acts as the Proton donor/acceptor in catalysis.

Belongs to the phosphoglycerate mutase family. BPG-dependent PGAM subfamily.

The enzyme catalyses (2R)-2-phosphoglycerate = (2R)-3-phosphoglycerate. It functions in the pathway carbohydrate degradation; glycolysis; pyruvate from D-glyceraldehyde 3-phosphate: step 3/5. Catalyzes the interconversion of 2-phosphoglycerate and 3-phosphoglycerate. The chain is 2,3-bisphosphoglycerate-dependent phosphoglycerate mutase from Streptomyces griseus subsp. griseus (strain JCM 4626 / CBS 651.72 / NBRC 13350 / KCC S-0626 / ISP 5235).